A 406-amino-acid polypeptide reads, in one-letter code: Putative colanic acid biosynthesis glycosyltransferase WcaL (406 aa).

The protein belongs to the glycosyltransferase group 1 family. Glycosyltransferase 4 subfamily.

It participates in slime biogenesis; slime polysaccharide biosynthesis. This chain is Putative colanic acid biosynthesis glycosyltransferase WcaL (wcaL), found in Salmonella typhimurium (strain LT2 / SGSC1412 / ATCC 700720).